The chain runs to 507 residues: Extracellular elastase (507 aa).

Residues 1–28 (MKNFSKFALTSIAALTVASPLVNTEVDA) form the signal peptide. Residues 29-207 (KDKVSATQNI…VVDKLNMIKE (179 aa)) constitute a propeptide that is removed on maturation. Residue Asp347 participates in Ca(2+) binding. His351 contributes to the Zn(2+) binding site. Glu352 is a catalytic residue. Residues His355 and Glu375 each contribute to the Zn(2+) site. Positions 386, 388, 389, 391, 394, 397, 398, 401, and 404 each coordinate Ca(2+). The Proton donor role is filled by His435.

Belongs to the peptidase M4 family. Ca(2+) serves as cofactor. Zn(2+) is required as a cofactor.

The protein resides in the secreted. In terms of biological role, protease that has a low substrate specificity. Glucagon is preferentially cleaved between aromatic (Phe) and hydrophobic (Val) amino acids. Hydrolyzes casein and elastin. The chain is Extracellular elastase (sepA) from Staphylococcus epidermidis (strain ATCC 12228 / FDA PCI 1200).